The chain runs to 344 residues: Anamorsin homolog 1 (344 aa).

The N-terminal SAM-like domain stretch occupies residues 1–169 (MANNVGVLLA…DTGSVFQIRK (169 aa)). The tract at residues 170–233 (KVSNQNGNFR…EDDLLTEEDL (64 aa)) is linker. 4 residues coordinate [2Fe-2S] cluster: C244, C251, C254, and C256. The fe-S binding site A stretch occupies residues 244-256 (CAPTKKACKNCTC). [4Fe-4S] cluster contacts are provided by C282, C285, C293, and C296. 2 short sequence motifs (cx2C motif) span residues 282–285 (CGSC) and 293–296 (CAGC). Positions 282–296 (CGSCGLGDAFRCAGC) are fe-S binding site B.

It belongs to the anamorsin family. In terms of assembly, monomer. The cofactor is [2Fe-2S] cluster. Requires [4Fe-4S] cluster as cofactor.

The protein resides in the cytoplasm. It is found in the mitochondrion intermembrane space. In terms of biological role, component of the cytosolic iron-sulfur (Fe-S) protein assembly (CIA) machinery. Required for the maturation of extramitochondrial Fe-S proteins. Part of an electron transfer chain functioning in an early step of cytosolic Fe-S biogenesis, facilitating the de novo assembly of a [4Fe-4S] cluster on the cytosolic Fe-S scaffold complex. Electrons are transferred from NADPH via a FAD- and FMN-containing diflavin oxidoreductase. Together with the diflavin oxidoreductase, also required for the assembly of the diferric tyrosyl radical cofactor of ribonucleotide reductase (RNR), probably by providing electrons for reduction during radical cofactor maturation in the catalytic small subunit. This Physcomitrium patens (Spreading-leaved earth moss) protein is Anamorsin homolog 1.